The chain runs to 201 residues: Probable molybdenum cofactor guanylyltransferase (201 aa).

Residues 6–8 (LAG), Lys-18, Asp-67, and Asp-92 each bind GTP. Asp-92 provides a ligand contact to Mg(2+).

This sequence belongs to the MobA family. Mg(2+) is required as a cofactor.

It localises to the cytoplasm. It carries out the reaction Mo-molybdopterin + GTP + H(+) = Mo-molybdopterin guanine dinucleotide + diphosphate. In terms of biological role, transfers a GMP moiety from GTP to Mo-molybdopterin (Mo-MPT) cofactor (Moco or molybdenum cofactor) to form Mo-molybdopterin guanine dinucleotide (Mo-MGD) cofactor. The sequence is that of Probable molybdenum cofactor guanylyltransferase from Thermococcus kodakarensis (strain ATCC BAA-918 / JCM 12380 / KOD1) (Pyrococcus kodakaraensis (strain KOD1)).